Reading from the N-terminus, the 328-residue chain is ABC transporter I family member 20 (328 aa).

The ABC transporter domain maps to 14–257 (VEISGLRFTY…SKKSLMRTVE (244 aa)). 55–62 (GSNGAGKT) is a binding site for ATP. Residues 263 to 295 (ERDEERKRRKERKANGLPEFETRTEESRVTGDP) are disordered. Basic and acidic residues predominate over residues 282–291 (FETRTEESRV).

The protein belongs to the ABC transporter superfamily. ABCI family.

It is found in the cytoplasm. In Arabidopsis thaliana (Mouse-ear cress), this protein is ABC transporter I family member 20 (ABCI20).